The chain runs to 450 residues: FAD-linked oxidoreductase penO (450 aa).

The region spanning 32 to 203 (PPELPYAIVK…TRFFIRTRPA (172 aa)) is the FAD-binding PCMH-type domain.

Belongs to the oxygen-dependent FAD-linked oxidoreductase family. Requires FAD as cofactor.

Its pathway is secondary metabolite biosynthesis. Its function is as follows. FAD-linked oxidoreductase; part of the gene cluster that mediates the biosynthesis of the indole diterpenes penitrems. The geranylgeranyl diphosphate (GGPP) synthase penG catalyzes the first step in penitrem biosynthesis via conversion of farnesyl pyrophosphate and isopentyl pyrophosphate into geranylgeranyl pyrophosphate (GGPP). Condensation of indole-3-glycerol phosphate with GGPP by the prenyl transferase penC then forms 3-geranylgeranylindole (3-GGI). Epoxidation by the FAD-dependent monooxygenase penM leads to a epoxidized-GGI that is substrate of the terpene cyclase penB for cyclization to yield paspaline. Paspaline is subsequently converted to 13-desoxypaxilline by the cytochrome P450 monooxygenase penP, the latter being then converted to paxilline by the cytochrome P450 monooxygenase penQ. Paxilline is converted to beta-paxitriol via C-10 ketoreduction by the short-chain dehydrogenase PC-15 which can be monoprenylated at the C-20 by the indole diterpene prenyltransferase penD. A two-step elimination (acetylation and elimination) process performed by the O-acetyltransferase PC-16 and the P.simplicissimum ptmI-ortholog not yet identified in P.crustosum, leads to the production of the prenylated form of penijanthine. The FAD-linked oxidoreductase ptmO then converts the prenylated form of penijanthine into PC-M5 which is in turn transformed into PC-M4 by the aromatic dimethylallyltransferase PC-22. A series of oxidation steps involving 4 cytochrome P450 monooxygenases (PC-21, PC-05, PC-23, PC-20) and a FAD-dependent monooxygenase (PC-14) are required for the transformation of PC-M4 to penitrems A and E. Synthesis of these final products is proposed to proceed via penitrems D and C (PC-21, PC-05, PC-14) and penitrems B and F (PC-21, PC-05, PC-14, PC-23). The sequence is that of FAD-linked oxidoreductase penO from Penicillium crustosum (Blue mold fungus).